The chain runs to 217 residues: Carboxylesterase Culp1 (217 aa).

The signal sequence occupies residues Met1–Ala32. Residues Cys35 and Cys107 are joined by a disulfide bond. Catalysis depends on Ser118, which acts as the Nucleophile. A disulfide bridge connects residues Cys177 and Cys184. Residue Asp181 is part of the active site. Catalysis depends on His193, which acts as the Proton donor/acceptor.

The protein belongs to the cutinase family.

It is found in the secreted. It catalyses the reaction a fatty acid ester + H2O = an aliphatic alcohol + a fatty acid + H(+). In terms of biological role, shows esterase activity, with a preference for short- and medium-chain fatty acids. The chain is Carboxylesterase Culp1 from Mycobacterium bovis (strain ATCC BAA-935 / AF2122/97).